We begin with the raw amino-acid sequence, 884 residues long: Coatomer subunit gamma-1 (884 aa).

HEAT repeat units lie at residues 65–100 (VEAT…SPSS), 101–138 (DEVI…GTLL), 286–323 (RELA…TRPL), 325–357 (VTNC…TGNE), and 358–395 (SSVD…KFPL). The tract at residues 592–612 (QPLQEKKAPGKKPPAGAPAPA) is disordered. The segment covering 602-612 (KKPPAGAPAPA) has biased composition (pro residues).

This sequence belongs to the COPG family. As to quaternary structure, oligomeric complex that consists of at least the alpha, beta, beta', gamma, delta, epsilon and zeta subunits.

Its subcellular location is the cytoplasm. The protein resides in the golgi apparatus membrane. It localises to the cytoplasmic vesicle. The protein localises to the COPI-coated vesicle membrane. The coatomer is a cytosolic protein complex that binds to dilysine motifs and reversibly associates with Golgi non-clathrin-coated vesicles, which further mediate biosynthetic protein transport from the ER, via the Golgi up to the trans Golgi network. Coatomer complex is required for budding from Golgi membranes, and is essential for the retrograde Golgi-to-ER transport of dilysine-tagged proteins. This Oryza sativa subsp. japonica (Rice) protein is Coatomer subunit gamma-1.